The following is a 188-amino-acid chain: MKANDIKKGNVVEYNGGIYQIRDIERSSPQGRGGNVRFRFIMYSVPGGVKTDASFDADDNLPEVELLRRQSTFSYKDGEAFVFMDDEDFTPYTLDADVIGTDAGYITDGLTGIYVQVIDEQPVAVQLPQTVTLEVVETPPELKGGTATKRPKPAKLNTGMEIMVPEYITNGERVLVNTTTGEFAGRAD.

It belongs to the elongation factor P family.

The protein is Elongation factor P-like protein of Xanthomonas axonopodis pv. citri (strain 306).